The sequence spans 467 residues: MLITFNFEVHQPHRLNKEINQNGNTLWEKYVDTKLNKEVFNKVANKCYIPTNELILELIDEYDFKVNYSITGVFVEQALEFNDYVLDLFKDLVKTGNVELIAETYHHSLTSLFETEDEFIEDIEMHRKMYKEIFGFKAKVFRNTELIYNNRIAKIAKDLGFKAIFTEGIEKILGWRSPNYLYQSPDGMKILLRNYRLSDDIGFRFSARDWDQYPLTADKYAIWLASTPGEVINIYMDYETFGEHHWKETGIFEFLRYLPIEIAKHEHLEVVNVSEVVDRLEPRGEIYVHEFATISWADTERDVSAWLGNKMQRISFEKLKDIGKFIKENSNKLKKLNKFDEIYKMYKVLQTSDNLYYQSIKGLSDMSVHNYFSHFDTPFDAYASYLNILYDFEYYIKELLAKSEFDKNNRRKDGQKQYEKDDEVKKESLINTNIIVAKDDKTESIYIEDEEGKKNKRYERDEGFIIA.

The active-site Nucleophile is the glutamate 145.

The protein belongs to the glycosyl hydrolase 57 family.

It carries out the reaction Endohydrolysis of (1-&gt;4)-alpha-D-glucosidic linkages in polysaccharides containing three or more (1-&gt;4)-alpha-linked D-glucose units.. In Methanocaldococcus jannaschii (strain ATCC 43067 / DSM 2661 / JAL-1 / JCM 10045 / NBRC 100440) (Methanococcus jannaschii), this protein is Putative alpha-amylase.